A 226-amino-acid polypeptide reads, in one-letter code: MTVRKVVATAVLVALVSLVLNNAAAFTPNWVYQTLEDGRRRSVGLWWACWLVERPRGAPGPGARPGPADVRDCEALGWGSEAAGFQESRGTVKLQFDMMRACNLVATAALAAGQLTFVLGLTGLPLLSPDAQCWEEAMAAAFQLASFVLVIGLVTFYRIGPYTSLSWSCYLNIGACLLATLAAAMLIWNVLHRREDCTAPRVIVISRSLTARFRRGLDNDYVESPC.

Residues 1-5 (MTVRK) are Cytoplasmic-facing. The helical transmembrane segment at 6–26 (VVATAVLVALVSLVLNNAAAF) threads the bilayer. Residues 27 to 103 (TPNWVYQTLE…LQFDMMRACN (77 aa)) are Extracellular-facing. A helical transmembrane segment spans residues 104-124 (LVATAALAAGQLTFVLGLTGL). The Cytoplasmic segment spans residues 125 to 136 (PLLSPDAQCWEE). Residues 137 to 157 (AMAAAFQLASFVLVIGLVTFY) traverse the membrane as a helical segment. The Extracellular segment spans residues 158 to 170 (RIGPYTSLSWSCY). Residues 171-191 (LNIGACLLATLAAAMLIWNVL) traverse the membrane as a helical segment. Topologically, residues 192–226 (HRREDCTAPRVIVISRSLTARFRRGLDNDYVESPC) are cytoplasmic.

It localises to the cell junction. Its subcellular location is the adherens junction. It is found in the cell membrane. Functionally, can influence paracellular permeability. Appears to be involved in cell-cell interactions through adherens. The sequence is that of Transmembrane protein 204 (TMEM204) from Bos taurus (Bovine).